The sequence spans 178 residues: Non-specific lipid transfer protein-like 1 (178 aa).

The N-terminal stretch at 1–26 (MAVAARAAAVACLLVVGLAAVAGVDG) is a signal peptide. Cystine bridges form between cysteine 50-cysteine 68 and cysteine 69-cysteine 110. Asparagine 99 carries N-linked (GlcNAc...) asparagine glycosylation. Alanine 149 carries GPI-anchor amidated alanine lipidation. A propeptide spans 150–178 (AARSPMASTTAVLVVAAAVAAPLLAFFHF) (removed in mature form).

Belongs to the plant LTP family. Post-translationally, O-glycosylated on hydroxyprolines; noncontiguous hydroxylproline residues are glycosylated with arabinogalactan. Expressed in roots, stems, leaves, flowers and seeds.

It is found in the vacuole. The protein resides in the aleurone grain membrane. The chain is Non-specific lipid transfer protein-like 1 (LTPL1) from Oryza sativa subsp. japonica (Rice).